The chain runs to 227 residues: Nitrobenzene nitroreductase (227 aa).

14 to 18 (RRAKR) provides a ligand contact to FMN. NADP(+)-binding residues include Ser-44 and Ile-109. FMN contacts are provided by residues 172-173 (VF) and Lys-215.

This sequence belongs to the nitroreductase family. Monomer. The cofactor is FMN.

The catalysed reaction is N-phenylhydroxylamine + 2 NADP(+) + H2O = nitrobenzene + 2 NADPH + 2 H(+). It functions in the pathway xenobiotic degradation; nitrobenzene degradation. Its activity is regulated as follows. Inhibited by dicumarol, p-hydroxymercuribenzoate and salicyl hydroxamate. Involved in the biodegradation of nitroaromatic compounds. Catalyzes the two-electron reduction of nitrobenzene (NB) to produce a nitrosobenzene (NOB) intermediate, which is immediately reduced to hydroxylaminobenzene (HAB) by a second two-electron transfer. Also active on menadione and nitrofurazone. Replacing NADPH with NADH results in a 4-fold decrease in the reaction rate. This Ectopseudomonas oleovorans (Pseudomonas oleovorans) protein is Nitrobenzene nitroreductase.